A 512-amino-acid chain; its full sequence is Protein SHC1 (512 aa).

Residues 101 to 113 (EQDEFENDVEDDA) show a composition bias toward acidic residues. Disordered stretches follow at residues 101–122 (EQDE…EKSQ) and 144–165 (DGNS…SVAL). 4 Sel1-like repeats span residues 318-353 (PDAQ…KRLH), 354-389 (IESV…TKNH), 390-429 (PAAM…SMAS), and 433-470 (CGAP…ALGH).

The protein belongs to the SKT5 family.

The protein resides in the cytoplasm. Its subcellular location is the cytoplasmic granule membrane. Required for the activation of chitin synthase III (CHS3) activity during the sporulation process. The protein is Protein SHC1 (SHC1) of Saccharomyces cerevisiae (strain YJM789) (Baker's yeast).